Reading from the N-terminus, the 926-residue chain is OTU domain-containing protein 7A (926 aa).

A Phosphoserine modification is found at S121. The interval 170 to 413 is TRAF-binding; that stretch reads ERDLIEQATM…AVDPGKDWEW (244 aa). Residues 185 to 452 form a catalytic region; sequence AGRLNWWSTV…VTWIRIPSET (268 aa). The region spanning 201-377 is the OTU domain; the sequence is LLPLATTGDG…QAHFSALVSM (177 aa). Residue D209 is part of the active site. C212 functions as the Nucleophile in the catalytic mechanism. Catalysis depends on H370, which acts as the Proton acceptor. Disordered regions lie at residues 455–517, 540–615, and 671–779; these read PLAQ…DSVA, GLVH…GDAW, and EQEQ…ARQS. Low complexity predominate over residues 484-494; sequence VCSNSNSNNGK. Residues 495–513 show a composition bias toward basic and acidic residues; that stretch reads NGKDKEKEKQRKDKDKTRA. Residues 497–512 carry the Nuclear localization signal motif; sequence KDKEKEKQRKDKDKTR. 3 stretches are compositionally biased toward low complexity: residues 579–595, 680–691, and 731–750; these read GASA…PSPT, AAAAAAATATAT, and SPGT…AASP. The segment covering 751 to 767 has biased composition (gly residues); the sequence is GPGGGARRAAPGTGGPT. R880 bears the Omega-N-methylarginine mark. Residues 884–919 form an A20-type zinc finger; sequence GPAQRRCQRENCAFYGRAETEHFCSYCYREELRRRR. Residues C890, C895, C907, and C910 each coordinate Zn(2+).

This sequence belongs to the peptidase C64 family.

It localises to the cytoplasm. Its subcellular location is the nucleus. The catalysed reaction is Thiol-dependent hydrolysis of ester, thioester, amide, peptide and isopeptide bonds formed by the C-terminal Gly of ubiquitin (a 76-residue protein attached to proteins as an intracellular targeting signal).. In terms of biological role, deubiquitinase, which cleaves 'Lys-11'-linked polyubiquitin chains. The chain is OTU domain-containing protein 7A (Otud7a) from Mus musculus (Mouse).